The following is a 153-amino-acid chain: D-aminoacyl-tRNA deacylase (153 aa).

The short motif at 142 to 143 (GP) is the Gly-cisPro motif, important for rejection of L-amino acids element.

The protein belongs to the DTD family. As to quaternary structure, homodimer.

It localises to the cytoplasm. It carries out the reaction glycyl-tRNA(Ala) + H2O = tRNA(Ala) + glycine + H(+). The enzyme catalyses a D-aminoacyl-tRNA + H2O = a tRNA + a D-alpha-amino acid + H(+). In terms of biological role, an aminoacyl-tRNA editing enzyme that deacylates mischarged D-aminoacyl-tRNAs. Also deacylates mischarged glycyl-tRNA(Ala), protecting cells against glycine mischarging by AlaRS. Acts via tRNA-based rather than protein-based catalysis; rejects L-amino acids rather than detecting D-amino acids in the active site. By recycling D-aminoacyl-tRNA to D-amino acids and free tRNA molecules, this enzyme counteracts the toxicity associated with the formation of D-aminoacyl-tRNA entities in vivo and helps enforce protein L-homochirality. This Cupriavidus necator (strain ATCC 17699 / DSM 428 / KCTC 22496 / NCIMB 10442 / H16 / Stanier 337) (Ralstonia eutropha) protein is D-aminoacyl-tRNA deacylase.